The primary structure comprises 268 residues: Small ribosomal subunit protein uS2 (268 aa).

This sequence belongs to the universal ribosomal protein uS2 family.

In Caulobacter vibrioides (strain ATCC 19089 / CIP 103742 / CB 15) (Caulobacter crescentus), this protein is Small ribosomal subunit protein uS2.